We begin with the raw amino-acid sequence, 149 residues long: Calmodulin-3 (149 aa).

An N-acetylalanine modification is found at A2. EF-hand domains lie at 8–43 (DQIAEFKEAFSLFDKDGDGCITTKELGTVMRSLGQN), 44–79 (PTEAELQDMINEVDADGNGTIDFPEFLNLMARKMKD), 81–116 (DSEEELKEAFRVFDKDQNGFISAAELRHVMTNLGEK), and 117–149 (LTDEEVEEMIREADVDGDGQINYDEFVKVMMAK). Positions 21, 23, 25, 27, 32, 57, 59, 61, 63, 68, 94, 96, 98, and 105 each coordinate Ca(2+). An N6,N6,N6-trimethyllysine modification is found at K116. Residues D130, D132, D134, Q136, and E141 each contribute to the Ca(2+) site.

This sequence belongs to the calmodulin family.

Functionally, calmodulin mediates the control of a large number of enzymes, ion channels and other proteins by Ca(2+). Among the enzymes to be stimulated by the calmodulin-Ca(2+) complex are a number of protein kinases and phosphatases. In Oryza sativa subsp. japonica (Rice), this protein is Calmodulin-3 (CAM3).